The primary structure comprises 204 residues: Guanylate kinase (204 aa).

One can recognise a Guanylate kinase-like domain in the interval 4-182; that stretch reads GMLVVVSGPS…AVNDLEAVLT (179 aa). 11–18 lines the ATP pocket; that stretch reads GPSGAGKG.

Belongs to the guanylate kinase family.

The protein resides in the cytoplasm. The catalysed reaction is GMP + ATP = GDP + ADP. In terms of biological role, essential for recycling GMP and indirectly, cGMP. The chain is Guanylate kinase from Carboxydothermus hydrogenoformans (strain ATCC BAA-161 / DSM 6008 / Z-2901).